The following is a 314-amino-acid chain: Trimethylamine N-oxide-binding protein (314 aa).

The first 24 residues, 1–24 (MKKIVSLMSALVISVVSFAGISNA), serve as a signal peptide directing secretion. The trimethylamine N-oxide site is built by Trp-38, Trp-85, Glu-114, Trp-164, and Trp-212.

The complex is probably composed of two ATP-binding proteins (TmoW), two transmembrane proteins (TmoV) and a solute-binding protein (TmoX).

Its subcellular location is the periplasm. Functionally, part of the ABC transporter complex TmoXWV involved in trimethylamine N-oxide (TMAO) import. Possesses a high binding affinity toward TMAO, but presents little binding affinity toward betaine, carnitine, trimethylamine (TMA) or dimethylamine (DMA). The protein is Trimethylamine N-oxide-binding protein of Pelagibacter ubique (strain HTCC1062).